We begin with the raw amino-acid sequence, 358 residues long: Alanine racemase, biosynthetic (358 aa).

The Proton acceptor; specific for D-alanine role is filled by Lys34. Lys34 is subject to N6-(pyridoxal phosphate)lysine. Arg130 contacts substrate. The active-site Proton acceptor; specific for L-alanine is the Tyr254. Met302 contacts substrate.

Belongs to the alanine racemase family. It depends on pyridoxal 5'-phosphate as a cofactor.

It carries out the reaction L-alanine = D-alanine. It participates in amino-acid biosynthesis; D-alanine biosynthesis; D-alanine from L-alanine: step 1/1. Its pathway is cell wall biogenesis; peptidoglycan biosynthesis. Functionally, catalyzes the interconversion of L-alanine and D-alanine. Provides the D-alanine required for cell wall biosynthesis. The sequence is that of Alanine racemase, biosynthetic (alr) from Pseudomonas aeruginosa (strain ATCC 15692 / DSM 22644 / CIP 104116 / JCM 14847 / LMG 12228 / 1C / PRS 101 / PAO1).